Reading from the N-terminus, the 175-residue chain is Co-chaperone protein HscB homolog (175 aa).

Residues Ser7 to Leu79 form the J domain.

Belongs to the HscB family. Interacts with HscA and stimulates its ATPase activity.

Functionally, co-chaperone involved in the maturation of iron-sulfur cluster-containing proteins. Seems to help targeting proteins to be folded toward HscA. The protein is Co-chaperone protein HscB homolog of Paraburkholderia xenovorans (strain LB400).